The chain runs to 433 residues: Enolase (433 aa).

(2R)-2-phosphoglycerate is bound at residue Gln-167. Catalysis depends on Glu-209, which acts as the Proton donor. Residues Asp-246, Glu-291, and Asp-318 each contribute to the Mg(2+) site. Residues Lys-343, Arg-372, Ser-373, and Lys-394 each contribute to the (2R)-2-phosphoglycerate site. Catalysis depends on Lys-343, which acts as the Proton acceptor.

This sequence belongs to the enolase family. Component of the RNA degradosome, a multiprotein complex involved in RNA processing and mRNA degradation. Requires Mg(2+) as cofactor.

It is found in the cytoplasm. The protein localises to the secreted. Its subcellular location is the cell surface. It carries out the reaction (2R)-2-phosphoglycerate = phosphoenolpyruvate + H2O. It functions in the pathway carbohydrate degradation; glycolysis; pyruvate from D-glyceraldehyde 3-phosphate: step 4/5. Its function is as follows. Catalyzes the reversible conversion of 2-phosphoglycerate (2-PG) into phosphoenolpyruvate (PEP). It is essential for the degradation of carbohydrates via glycolysis. The chain is Enolase from Marinomonas sp. (strain MWYL1).